The chain runs to 155 residues: Ribosome maturation factor RimP (155 aa).

It belongs to the RimP family.

The protein localises to the cytoplasm. Its function is as follows. Required for maturation of 30S ribosomal subunits. The polypeptide is Ribosome maturation factor RimP (Hamiltonella defensa subsp. Acyrthosiphon pisum (strain 5AT)).